Reading from the N-terminus, the 484-residue chain is Glutamate--tRNA ligase (484 aa).

A 'HIGH' region motif is present at residues 11–21; sequence PSPTGYLHIGN. Residues 252 to 256 carry the 'KMSKS' region motif; the sequence is KLSKR. Residue Lys-255 participates in ATP binding.

This sequence belongs to the class-I aminoacyl-tRNA synthetase family. Glutamate--tRNA ligase type 1 subfamily. As to quaternary structure, monomer.

The protein resides in the cytoplasm. The catalysed reaction is tRNA(Glu) + L-glutamate + ATP = L-glutamyl-tRNA(Glu) + AMP + diphosphate. Functionally, catalyzes the attachment of glutamate to tRNA(Glu) in a two-step reaction: glutamate is first activated by ATP to form Glu-AMP and then transferred to the acceptor end of tRNA(Glu). This is Glutamate--tRNA ligase from Staphylococcus aureus (strain Mu3 / ATCC 700698).